The chain runs to 439 residues: Chitinase-like protein Idgf1 (439 aa).

Positions 1–20 are cleaved as a signal peptide; sequence MRFQLCYLLGLLSVTSLSHA. Positions 22-439 constitute a GH18 domain; the sequence is SNLICYYDST…IVRSIKYFMG (418 aa). An intrachain disulfide couples cysteine 26 to cysteine 53. N-linked (GlcNAc...) asparagine glycans are attached at residues asparagine 122, asparagine 218, and asparagine 346. A disulfide bridge links cysteine 340 with cysteine 423.

Belongs to the glycosyl hydrolase 18 family. IDGF subfamily. Glycosylated.

It is found in the secreted. Its function is as follows. Cooperates with insulin-like peptides to stimulate the proliferation, polarization and motility of imaginal disk cells. May act by stabilizing the binding of insulin-like peptides to its receptor through a simultaneous interaction with both molecules to form a multiprotein signaling complex. The chain is Chitinase-like protein Idgf1 (Idgf1) from Drosophila yakuba (Fruit fly).